The primary structure comprises 485 residues: Cobyric acid synthase (485 aa).

A GATase cobBQ-type domain is found at 248–435; sequence VLKVVVPVLP…LHGLFESPDA (188 aa). Cys329 serves as the catalytic Nucleophile. Residue His427 is part of the active site.

This sequence belongs to the CobB/CobQ family. CobQ subfamily.

It functions in the pathway cofactor biosynthesis; adenosylcobalamin biosynthesis. In terms of biological role, catalyzes amidations at positions B, D, E, and G on adenosylcobyrinic A,C-diamide. NH(2) groups are provided by glutamine, and one molecule of ATP is hydrogenolyzed for each amidation. This is Cobyric acid synthase from Stutzerimonas stutzeri (strain A1501) (Pseudomonas stutzeri).